The following is a 400-amino-acid chain: Lipid-A-disaccharide synthase (400 aa).

The protein belongs to the LpxB family.

The enzyme catalyses a lipid X + a UDP-2-N,3-O-bis[(3R)-3-hydroxyacyl]-alpha-D-glucosamine = a lipid A disaccharide + UDP + H(+). It functions in the pathway bacterial outer membrane biogenesis; LPS lipid A biosynthesis. Functionally, condensation of UDP-2,3-diacylglucosamine and 2,3-diacylglucosamine-1-phosphate to form lipid A disaccharide, a precursor of lipid A, a phosphorylated glycolipid that anchors the lipopolysaccharide to the outer membrane of the cell. The polypeptide is Lipid-A-disaccharide synthase (Acidobacterium capsulatum (strain ATCC 51196 / DSM 11244 / BCRC 80197 / JCM 7670 / NBRC 15755 / NCIMB 13165 / 161)).